A 269-amino-acid polypeptide reads, in one-letter code: Proline-rich protein 7 (269 aa).

Residues 1–9 lie on the Extracellular side of the membrane; it reads MVMSQGTYT. The segment at 1–44 is required for interaction with NMDA receptors; it reads MVMSQGTYTFLTCFAGFWLIWGLIVLLCCFCSFLRRRLKRRQEE. A required for membrane localization region spans residues 2–39; the sequence is VMSQGTYTFLTCFAGFWLIWGLIVLLCCFCSFLRRRLK. The chain crosses the membrane as a helical; Signal-anchor for type III membrane protein span at residues 10–30; that stretch reads FLTCFAGFWLIWGLIVLLCCF. Residues 31 to 269 are Cytoplasmic-facing; the sequence is CSFLRRRLKR…IPLFGRTTAV (239 aa). Serine 64 is subject to Phosphoserine. 2 disordered regions span residues 64-83 and 98-128; these read SLAG…RSRL and LLHH…LSVP. The span at 108–117 shows a compositional bias: basic residues; that stretch reads AHPHPHHHAL. Positions 118-128 are enriched in pro residues; it reads PHPPPSHLSVP. The required for internalization stretch occupies residues 146 to 166; that stretch reads PCYEEAVLMAEPPPPYSEVLT. The required for apoptosis induction stretch occupies residues 146–269; that stretch reads PCYEEAVLMA…IPLFGRTTAV (124 aa). A PDZ-binding motif is present at residues 267–269; that stretch reads TAV.

Forms a complex with NMDA receptor zeta subunit GRIN1 and epsilon subunit GRIN2B. Interacts with GRIN2B. Interacts with GRIN1; the interaction is reduced upon NMDA receptor activity. Found in a postsynaptic membrane complex with DLG4 and GRIN1. Interacts with DLG4 (via PDZ3 domain and to lesser degree via PDZ2 domain). Interacts with FBXW7. Found in a complex with JUN and FBXW7. Interacts with JUN and FBXW7; the interaction inhibits ubiquitination-mediated JUN degradation promoting its phosphorylation and transcriptional activity. Interacts with SRC. Post-translationally, palmitoylated. In terms of processing, tyrosine phosphorylated, possibly by SRC. Expressed in brain. Expressed in the cerebral cortex and especially in hippocampal neural cells (at protein level).

It is found in the cell membrane. Its subcellular location is the postsynaptic cell membrane. It localises to the postsynaptic density membrane. The protein resides in the cytoplasm. The protein localises to the perinuclear region. It is found in the synapse. Its subcellular location is the cell projection. It localises to the dendrite. The protein resides in the nucleus. Its function is as follows. Acts as a synapse-to-nucleus messenger to promote NMDA receptor-mediated excitotoxicity in neurons in a JUN-dependent manner. Inhibits ubiquitination-mediated degradation and promotes phosphorylation and transcriptional activity of transcription factor JUN. Might play a redundant role in the regulation of T cell receptor signaling. Might promote apoptosis in T cells. This chain is Proline-rich protein 7 (Prr7), found in Rattus norvegicus (Rat).